The primary structure comprises 450 residues: mRNA cleavage and polyadenylation factor CLP1 (450 aa).

Residues E29, K67, and 137–142 (NSGKTS) contribute to the ATP site.

This sequence belongs to the Clp1 family. Clp1 subfamily. As to quaternary structure, component of a pre-mRNA cleavage factor complex. Interacts directly with PCF11.

The protein resides in the nucleus. In terms of biological role, required for endonucleolytic cleavage during polyadenylation-dependent pre-mRNA 3'-end formation. The polypeptide is mRNA cleavage and polyadenylation factor CLP1 (Yarrowia lipolytica (strain CLIB 122 / E 150) (Yeast)).